Consider the following 1194-residue polypeptide: Rho-associated protein kinase let-502 (1194 aa).

One can recognise a Protein kinase domain in the interval 68 to 330 (FRQLKVIGRG…VDEIRNHKFF (263 aa)). ATP contacts are provided by residues 74-82 (IGRGAFGEV) and Lys97. The active-site Proton acceptor is the Asp190. An AGC-kinase C-terminal domain is found at 331 to 402 (KNDEWTFETL…SNEYSPVKKL (72 aa)). 2 coiled-coil regions span residues 436–844 (EEQY…MAKR) and 875–933 (GRIL…EYPQ). The region spanning 784 to 846 (EQNLKHIENQ…LEEEMAKRQP (63 aa)) is the RhoBD domain. Positions 961 to 1171 (IQIDGWLSLR…SQLRRFIEAS (211 aa)) constitute a PH domain. A Phorbol-ester/DAG-type zinc finger spans residues 1085–1138 (RHDFQELSYHTRTYCDDCGKKLSDFIRPTPAFECKNCHYKTHKEHIAQGTITMC).

This sequence belongs to the protein kinase superfamily. AGC Ser/Thr protein kinase family. As to quaternary structure, interacts with rho-1. The cofactor is Mg(2+).

The protein localises to the cytoplasm. It is found in the cytoskeleton. Its subcellular location is the cleavage furrow. It carries out the reaction L-seryl-[protein] + ATP = O-phospho-L-seryl-[protein] + ADP + H(+). The catalysed reaction is L-threonyl-[protein] + ATP = O-phospho-L-threonyl-[protein] + ADP + H(+). Its activity is regulated as follows. Activated by rho-1 binding. In terms of biological role, negatively regulates mel-11 to relieve the inhibition of mlc-4, allowing contraction of the circumferentially oriented microfilaments in epidermal cells and thereby regulating myosin II contractility during spermathecal contraction, cleavage furrow contraction in early embryos, and embryonic elongation and morphogenesis. Required for P-cell migration. May also play a role in oocyte cellularization. The polypeptide is Rho-associated protein kinase let-502 (Caenorhabditis briggsae).